The following is a 265-amino-acid chain: Serine protease 1 (265 aa).

Positions 1–21 (MKLFVFLALAVAAATAVPAPA) are cleaved as a signal peptide. Residues 22 to 35 (QKLTPTPIKDIQGR) constitute a propeptide that is removed on maturation. One can recognise a Peptidase S1 domain in the interval 36-262 (ITNGYPAYEG…YLDWIRDNTG (227 aa)). Cys63 and Cys79 form a disulfide bridge. Catalysis depends on charge relay system residues His78 and Asp123. 2 cysteine pairs are disulfide-bonded: Cys189–Cys201 and Cys211–Cys239. Ser215 acts as the Charge relay system in catalysis.

Belongs to the peptidase S1 family. Abundantly expressed in the larval gut.

Major function may be to aid in digestion. In Drosophila melanogaster (Fruit fly), this protein is Serine protease 1.